Reading from the N-terminus, the 225-residue chain is Paired immunoglobulin-like type 2 receptor beta-2 (225 aa).

Positions 1 to 31 are cleaved as a signal peptide; the sequence is MALLISLPGETPAMAQILLLLSSACLHAGNS. The Extracellular segment spans residues 32-195; that stretch reads ARSNGGNDFG…NPSLMNLGAM (164 aa). Residues asparagine 90, asparagine 107, and asparagine 160 are each glycosylated (N-linked (GlcNAc...) asparagine). A helical transmembrane segment spans residues 196–216; it reads VTMLLAKVVVIILVYGWMIFL. Residues 217–225 are Cytoplasmic-facing; that stretch reads RWKQRPDPA.

It localises to the membrane. In terms of biological role, paired receptors consist of highly related activating and inhibitory receptors and are widely involved in the regulation of the immune system. PILRB2 is probably a cellular signaling activating receptor that associates with ITAM-bearing adapter molecules on the cell surface. The sequence is that of Paired immunoglobulin-like type 2 receptor beta-2 (Pilrb2) from Mus musculus (Mouse).